Reading from the N-terminus, the 630-residue chain is SHC-transforming protein 4 (630 aa).

The CH2 stretch occupies residues 1–185 (MRERGQDSLA…RQDRHFLQHL (185 aa)). Disordered stretches follow at residues 39–80 (TSLD…QESP) and 118–150 (KLQESRDPGSSGPSSPETSLSRSGTAPPPQQDL). Low complexity predominate over residues 125–142 (PGSSGPSSPETSLSRSGT). The region spanning 186-369 (LGMGMNYCVR…VHIDSHAEER (184 aa)) is the PID domain. Residues 370–525 (EDHEYYNEIP…HIKQQLWSEE (156 aa)) are CH1. A Phosphotyrosine modification is found at Tyr424. 2 stretches are compositionally biased toward polar residues: residues 471–486 (LQSTPGSAGNQRSAQP) and 502–513 (PGATAQPASSHS). The disordered stretch occupies residues 471 to 514 (LQSTPGSAGNQRSAQPLGSPWHCGKAPETVQPGATAQPASSHSL). One can recognise an SH2 domain in the interval 526-617 (CYHGKLSRKA…GSEVSLKQPV (92 aa)).

Interacts (via PID domain) with phosphorylated MUSK (via NPXY motif); undergoes tyrosine phosphorylation downstream of activated MUSK. Interacts with GRB2; the interaction is dependent of Tyr-424 phosphorylation and increased by EGF. Post-translationally, phosphorylated; the phosphorylation is enhanced by EGF. Phosphorylation at Tyr-424 is required for the interaction with GRB2. As to expression, only expressed in melanomas. Weakly expressed in normal melanocytes and benign nevi. Highly expressed at the transition from radial growth phase to vertical growth phase and metastatic melanomas, when tumor cells acquire migratory competence and invasive potential.

Its subcellular location is the postsynaptic cell membrane. Its function is as follows. Activates both Ras-dependent and Ras-independent migratory pathways in melanomas. Contributes to the early phases of agrin-induced tyrosine phosphorylation of CHRNB1. The chain is SHC-transforming protein 4 (SHC4) from Homo sapiens (Human).